The following is a 306-amino-acid chain: Putative HTH-type transcriptional regulatory protein Mhun_2548 (306 aa).

The region spanning 132–189 (LRELRETRSLSLGDLGQILGVSRRTVAKYEAGMGTTIEIALRIEETFDSGVIEPIDLI) is the HTH cro/C1-type domain. A DNA-binding region (H-T-H motif) is located at residues 143-162 (LGDLGQILGVSRRTVAKYEA).

The protein is Putative HTH-type transcriptional regulatory protein Mhun_2548 of Methanospirillum hungatei JF-1 (strain ATCC 27890 / DSM 864 / NBRC 100397 / JF-1).